A 326-amino-acid chain; its full sequence is Putative cell agglutination protein pfl9 (326 aa).

The first 21 residues, 1 to 21 (MNVVKYIIFSFALAPLLLVNA), serve as a signal peptide directing secretion. The N-linked (GlcNAc...) asparagine glycan is linked to Asn-25. 2 repeat units span residues 103–137 (STIT…IPTA) and 138–175 (GTFT…TPSC). The interval 103 to 175 (STITTTITSG…GEVEVITPSC (73 aa)) is 2 X 36 AA approximate tandem repeats. Positions 164 to 326 (QSGEVEVITP…RANDVTLQLY (163 aa)) constitute a DIPSY domain.

Belongs to the mam3/map4 family.

The protein localises to the cell surface. May be involved in agglutination during conjugation or other aspects of colony formation. Induces flocculation when overexpressed. This is Putative cell agglutination protein pfl9 from Schizosaccharomyces pombe (strain 972 / ATCC 24843) (Fission yeast).